A 915-amino-acid chain; its full sequence is Protein translocase subunit SecA (915 aa).

ATP is bound by residues glutamine 87, 105-109, and aspartate 512; that span reads GEGKT. The segment at 881–915 is disordered; sequence LPGTAPVRPEPKIGRNEPCPCGSGKKYKHCHGQLN. Zn(2+)-binding residues include cysteine 899, cysteine 901, cysteine 910, and histidine 911. Residues 905 to 915 are compositionally biased toward basic residues; sequence KKYKHCHGQLN.

The protein belongs to the SecA family. As to quaternary structure, monomer and homodimer. Part of the essential Sec protein translocation apparatus which comprises SecA, SecYEG and auxiliary proteins SecDF-YajC and YidC. Requires Zn(2+) as cofactor.

It localises to the cell inner membrane. The protein localises to the cytoplasm. The enzyme catalyses ATP + H2O + cellular proteinSide 1 = ADP + phosphate + cellular proteinSide 2.. Its function is as follows. Part of the Sec protein translocase complex. Interacts with the SecYEG preprotein conducting channel. Has a central role in coupling the hydrolysis of ATP to the transfer of proteins into and across the cell membrane, serving both as a receptor for the preprotein-SecB complex and as an ATP-driven molecular motor driving the stepwise translocation of polypeptide chains across the membrane. The sequence is that of Protein translocase subunit SecA from Azotobacter vinelandii (strain DJ / ATCC BAA-1303).